The primary structure comprises 102 residues: NADH-quinone oxidoreductase subunit K (102 aa).

A run of 3 helical transmembrane segments spans residues 5–25 (LGHF…GIFL), 31–51 (IVLL…FVAF), and 62–82 (IFVF…LAIL).

It belongs to the complex I subunit 4L family. NDH-1 is composed of 14 different subunits. Subunits NuoA, H, J, K, L, M, N constitute the membrane sector of the complex.

Its subcellular location is the cell inner membrane. The enzyme catalyses a quinone + NADH + 5 H(+)(in) = a quinol + NAD(+) + 4 H(+)(out). In terms of biological role, NDH-1 shuttles electrons from NADH, via FMN and iron-sulfur (Fe-S) centers, to quinones in the respiratory chain. The immediate electron acceptor for the enzyme in this species is believed to be ubiquinone. Couples the redox reaction to proton translocation (for every two electrons transferred, four hydrogen ions are translocated across the cytoplasmic membrane), and thus conserves the redox energy in a proton gradient. This chain is NADH-quinone oxidoreductase subunit K, found in Albidiferax ferrireducens (strain ATCC BAA-621 / DSM 15236 / T118) (Rhodoferax ferrireducens).